We begin with the raw amino-acid sequence, 866 residues long: Leucine--tRNA ligase (866 aa).

Residues 42–52 (PYPSGKLHMGH) carry the 'HIGH' region motif. Residues 624-628 (TMSKS) carry the 'KMSKS' region motif. Residue Lys627 coordinates ATP.

Belongs to the class-I aminoacyl-tRNA synthetase family.

It is found in the cytoplasm. The enzyme catalyses tRNA(Leu) + L-leucine + ATP = L-leucyl-tRNA(Leu) + AMP + diphosphate. This chain is Leucine--tRNA ligase, found in Nitrosospira multiformis (strain ATCC 25196 / NCIMB 11849 / C 71).